Reading from the N-terminus, the 86-residue chain is Putative regulatory protein OB1501 (86 aa).

It belongs to the RemA family.

The polypeptide is Putative regulatory protein OB1501 (Oceanobacillus iheyensis (strain DSM 14371 / CIP 107618 / JCM 11309 / KCTC 3954 / HTE831)).